A 275-amino-acid polypeptide reads, in one-letter code: Rhamnulose-1-phosphate aldolase (275 aa).

The active site involves Glu117. Residues His141, His143, and His212 each contribute to the Zn(2+) site.

This sequence belongs to the aldolase class II family. RhaD subfamily. Homotetramer. It depends on Zn(2+) as a cofactor.

It localises to the cytoplasm. It carries out the reaction L-rhamnulose 1-phosphate = (S)-lactaldehyde + dihydroxyacetone phosphate. The protein operates within carbohydrate degradation; L-rhamnose degradation; glycerone phosphate from L-rhamnose: step 3/3. In terms of biological role, catalyzes the reversible cleavage of L-rhamnulose-1-phosphate to dihydroxyacetone phosphate (DHAP) and L-lactaldehyde. This chain is Rhamnulose-1-phosphate aldolase, found in Salmonella dublin (strain CT_02021853).